A 117-amino-acid chain; its full sequence is UPF0122 protein Dred_2057 (117 aa).

It belongs to the UPF0122 family.

In terms of biological role, might take part in the signal recognition particle (SRP) pathway. This is inferred from the conservation of its genetic proximity to ftsY/ffh. May be a regulatory protein. The chain is UPF0122 protein Dred_2057 from Desulforamulus reducens (strain ATCC BAA-1160 / DSM 100696 / MI-1) (Desulfotomaculum reducens).